The sequence spans 316 residues: Aspartate-semialdehyde dehydrogenase (316 aa).

NADP(+) is bound by residues 13 to 16 (TGAV) and 41 to 42 (RS). Arg-101 lines the phosphate pocket. The active-site Acyl-thioester intermediate is Cys-132. Residue Gln-159 coordinates substrate. Position 162 to 163 (162 to 163 (SG)) interacts with NADP(+). Lys-216 contacts phosphate. Arg-238 contributes to the substrate binding site. Residue His-245 is the Proton acceptor of the active site. Asn-316 lines the NADP(+) pocket.

This sequence belongs to the aspartate-semialdehyde dehydrogenase family. Homodimer.

The enzyme catalyses L-aspartate 4-semialdehyde + phosphate + NADP(+) = 4-phospho-L-aspartate + NADPH + H(+). Its pathway is amino-acid biosynthesis; L-lysine biosynthesis via DAP pathway; (S)-tetrahydrodipicolinate from L-aspartate: step 2/4. The protein operates within amino-acid biosynthesis; L-methionine biosynthesis via de novo pathway; L-homoserine from L-aspartate: step 2/3. It participates in amino-acid biosynthesis; L-threonine biosynthesis; L-threonine from L-aspartate: step 2/5. Functionally, catalyzes the NADPH-dependent formation of L-aspartate-semialdehyde (L-ASA) by the reductive dephosphorylation of L-aspartyl-4-phosphate. This Vibrio mimicus protein is Aspartate-semialdehyde dehydrogenase (asd).